The sequence spans 89 residues: Large ribosomal subunit protein bL27 (89 aa).

Residues 1–26 (MAHKKAGGSSKNGRDSNAQRRGVKRF) are disordered.

The protein belongs to the bacterial ribosomal protein bL27 family.

The sequence is that of Large ribosomal subunit protein bL27 from Maridesulfovibrio salexigens (strain ATCC 14822 / DSM 2638 / NCIMB 8403 / VKM B-1763) (Desulfovibrio salexigens).